The chain runs to 281 residues: ATP phosphoribosyltransferase (281 aa).

The protein belongs to the ATP phosphoribosyltransferase family. Long subfamily. It depends on Mg(2+) as a cofactor.

It is found in the cytoplasm. It carries out the reaction 1-(5-phospho-beta-D-ribosyl)-ATP + diphosphate = 5-phospho-alpha-D-ribose 1-diphosphate + ATP. It functions in the pathway amino-acid biosynthesis; L-histidine biosynthesis; L-histidine from 5-phospho-alpha-D-ribose 1-diphosphate: step 1/9. With respect to regulation, feedback inhibited by histidine. In terms of biological role, catalyzes the condensation of ATP and 5-phosphoribose 1-diphosphate to form N'-(5'-phosphoribosyl)-ATP (PR-ATP). Has a crucial role in the pathway because the rate of histidine biosynthesis seems to be controlled primarily by regulation of HisG enzymatic activity. The sequence is that of ATP phosphoribosyltransferase from Corynebacterium glutamicum (strain R).